A 222-amino-acid chain; its full sequence is Probable transaldolase (222 aa).

The active-site Schiff-base intermediate with substrate is lysine 91.

It belongs to the transaldolase family. Type 3B subfamily.

Its subcellular location is the cytoplasm. The enzyme catalyses D-sedoheptulose 7-phosphate + D-glyceraldehyde 3-phosphate = D-erythrose 4-phosphate + beta-D-fructose 6-phosphate. It functions in the pathway carbohydrate degradation; pentose phosphate pathway; D-glyceraldehyde 3-phosphate and beta-D-fructose 6-phosphate from D-ribose 5-phosphate and D-xylulose 5-phosphate (non-oxidative stage): step 2/3. In terms of biological role, transaldolase is important for the balance of metabolites in the pentose-phosphate pathway. This Pelodictyon phaeoclathratiforme (strain DSM 5477 / BU-1) protein is Probable transaldolase.